We begin with the raw amino-acid sequence, 620 residues long: Chaperone protein HscA homolog (620 aa).

The protein belongs to the heat shock protein 70 family.

In terms of biological role, chaperone involved in the maturation of iron-sulfur cluster-containing proteins. Has a low intrinsic ATPase activity which is markedly stimulated by HscB. This chain is Chaperone protein HscA homolog, found in Pseudomonas syringae pv. syringae (strain B728a).